The primary structure comprises 620 residues: FAD-linked oxidoreductase notD (620 aa).

Residues 1 to 21 (MHYIRELLIVVFTSCPALSYA) form the signal peptide. N-linked (GlcNAc...) asparagine glycosylation is found at Asn50, Asn86, and Asn109. The region spanning 124–313 (SQGRIPRYSA…TSVTMPVFGA (190 aa)) is the FAD-binding PCMH-type domain. N-linked (GlcNAc...) asparagine glycosylation is present at Asn403.

Belongs to the oxygen-dependent FAD-linked oxidoreductase family. FAD serves as cofactor.

The protein operates within alkaloid biosynthesis. FAD-linked oxidoreductase; part of the gene cluster that mediates the biosynthesis of notoamide, a fungal indole alkaloid that belongs to a family of natural products containing a characteristic bicyclo[2.2.2]diazaoctane core. The first step of notoamide biosynthesis involves coupling of L-proline and L-tryptophan by the bimodular NRPS notE, to produce cyclo-L-tryptophan-L-proline called brevianamide F. The reverse prenyltransferase notF then acts as a deoxybrevianamide E synthase and converts brevianamide F to deoxybrevianamide E via reverse prenylation at C-2 of the indole ring leading to the bicyclo[2.2.2]diazaoctane core. Deoxybrevianamide E is further hydroxylated at C-6 of the indole ring, likely catalyzed by the cytochrome P450 monooxygenase notG, to yield 6-hydroxy-deoxybrevianamide E. 6-hydroxy-deoxybrevianamide E is a specific substrate of the prenyltransferase notC for normal prenylation at C-7 to produce 6-hydroxy-7-prenyl-deoxybrevianamide, also called notoamide S. As the proposed pivotal branching point in notoamide biosynthesis, notoamide S can be diverted to notoamide E through an oxidative pyran ring closure putatively catalyzed by either notH cytochrome P450 monooxygenase or the notD FAD-linked oxidoreductase. This step would be followed by an indole 2,3-epoxidation-initiated pinacol-like rearrangement catalyzed by the notB FAD-dependent monooxygenase leading to the formation of notoamide C and notoamide D. On the other hand notoamide S is converted to notoamide T by notH (or notD), a bifunctional oxidase that also functions as the intramolecular Diels-Alderase responsible for generation of (+)-notoamide T. To generate antipodal (-)-notoaminide T, notH' (or notD') in Aspergillus versicolor is expected to catalyze a Diels-Alder reaction leading to the opposite stereochemistry. The remaining oxidoreductase notD (or notH) likely catalyzes the oxidative pyran ring formation to yield (+)-stephacidin A. The FAD-dependent monooxygenase notI is highly similar to notB and is predicted to catalyze a similar conversion from (+)-stephacidin A to (-)-notoamide B via the 2,3-epoxidation of (+)-stephacidin A followed by a pinacol-type rearrangement. Finally, it remains unclear which enzyme could be responsible for the final hydroxylation steps leading to notoamide A and sclerotiamide. This Aspergillus sp. (strain MF297-2) protein is FAD-linked oxidoreductase notD.